A 147-amino-acid chain; its full sequence is D-aminoacyl-tRNA deacylase (147 aa).

Positions 136 to 137 (GP) match the Gly-cisPro motif, important for rejection of L-amino acids motif.

This sequence belongs to the DTD family. As to quaternary structure, homodimer.

Its subcellular location is the cytoplasm. The enzyme catalyses glycyl-tRNA(Ala) + H2O = tRNA(Ala) + glycine + H(+). It carries out the reaction a D-aminoacyl-tRNA + H2O = a tRNA + a D-alpha-amino acid + H(+). An aminoacyl-tRNA editing enzyme that deacylates mischarged D-aminoacyl-tRNAs. Also deacylates mischarged glycyl-tRNA(Ala), protecting cells against glycine mischarging by AlaRS. Acts via tRNA-based rather than protein-based catalysis; rejects L-amino acids rather than detecting D-amino acids in the active site. By recycling D-aminoacyl-tRNA to D-amino acids and free tRNA molecules, this enzyme counteracts the toxicity associated with the formation of D-aminoacyl-tRNA entities in vivo and helps enforce protein L-homochirality. The polypeptide is D-aminoacyl-tRNA deacylase (Streptococcus agalactiae serotype Ia (strain ATCC 27591 / A909 / CDC SS700)).